A 246-amino-acid polypeptide reads, in one-letter code: Dehydration-responsive element-binding protein 1H (246 aa).

Residues 1-43 are disordered; that stretch reads MDMAGHEVNSSSSSSGAESSSSSSGRQQYKKRPAGRTKFRETR. The span at 10–24 shows a compositional bias: low complexity; it reads SSSSSSGAESSSSSS. Over residues 28–37 the composition is skewed to basic residues; the sequence is QYKKRPAGRT. Residues 46 to 110 constitute a DNA-binding region (AP2/ERF); it reads VYRGVRRRGG…GGGAACLNFQ (65 aa). The segment at 155–187 is disordered; that stretch reads AMDEATSGVSAPPPLANNAGSSETPGPSSIDGT. The span at 172-181 shows a compositional bias: polar residues; sequence NAGSSETPGP.

The protein belongs to the AP2/ERF transcription factor family. ERF subfamily.

It is found in the nucleus. Transcriptional activator that binds specifically to the DNA sequence 5'-[AG]CCGAC-3'. Binding to the C-repeat/DRE element mediates high salinity- and dehydration-inducible transcription. The polypeptide is Dehydration-responsive element-binding protein 1H (DREB1H) (Oryza sativa subsp. indica (Rice)).